Here is a 141-residue protein sequence, read N- to C-terminus: Lutropin subunit beta (141 aa).

The N-terminal stretch at methionine 1 to alanine 20 is a signal peptide. Intrachain disulfides connect cysteine 29/cysteine 77, cysteine 43/cysteine 92, cysteine 46/cysteine 130, cysteine 54/cysteine 108, cysteine 58/cysteine 110, and cysteine 113/cysteine 120. N-linked (GlcNAc...) asparagine glycans are attached at residues asparagine 33 and asparagine 50.

Belongs to the glycoprotein hormones subunit beta family. Heterodimer of a common alpha chain and a unique beta chain which confers biological specificity to thyrotropin, lutropin, follitropin and gonadotropin.

The protein resides in the secreted. Functionally, promotes spermatogenesis and ovulation by stimulating the testes and ovaries to synthesize steroids. In Macaca fascicularis (Crab-eating macaque), this protein is Lutropin subunit beta (LHB).